We begin with the raw amino-acid sequence, 310 residues long: Carbamate kinase 1 (310 aa).

Homodimer (predominantly) and homotetramer.

Its subcellular location is the cytoplasm. It carries out the reaction hydrogencarbonate + NH4(+) + ATP = carbamoyl phosphate + ADP + H2O + H(+). Its pathway is metabolic intermediate metabolism; carbamoyl phosphate degradation; CO(2) and NH(3) from carbamoyl phosphate: step 1/1. With respect to regulation, inhibited by adenosine(5')pentaphospho(5')adenosine (Ap5A), Ap6A and to a much lower extent by Ap4A. In terms of biological role, catalyzes the reversible synthesis of carbamate and ATP from carbamoyl phosphate and ADP. Can also catalyze, although with low efficiency, the phosphorylation of bicarbonate, leading to the formation of carboxyphosphate, an unstable intermediate found in the reactions catalyzed by carbamoyl-phosphate synthase and biotin carboxylase. Can also use acetate. This is Carbamate kinase 1 (arcC1) from Enterococcus faecium (Streptococcus faecium).